The chain runs to 761 residues: 5-methyltetrahydropteroyltriglutamate--homocysteine methyltransferase (761 aa).

5-methyltetrahydropteroyltri-L-glutamate is bound by residues Arg16–Lys19 and Lys116. Residues Ile435–Ser437 and Glu488 each bind L-homocysteine. L-methionine is bound by residues Ile435–Ser437 and Glu488. 5-methyltetrahydropteroyltri-L-glutamate is bound by residues Arg519–Cys520 and Trp565. Asp603 contacts L-homocysteine. Residue Asp603 participates in L-methionine binding. Glu609 lines the 5-methyltetrahydropteroyltri-L-glutamate pocket. Residues His645, Cys647, and Glu669 each coordinate Zn(2+). The active-site Proton donor is His698. Cys730 provides a ligand contact to Zn(2+).

Belongs to the vitamin-B12 independent methionine synthase family. Zn(2+) is required as a cofactor.

It catalyses the reaction 5-methyltetrahydropteroyltri-L-glutamate + L-homocysteine = tetrahydropteroyltri-L-glutamate + L-methionine. It functions in the pathway amino-acid biosynthesis; L-methionine biosynthesis via de novo pathway; L-methionine from L-homocysteine (MetE route): step 1/1. Catalyzes the transfer of a methyl group from 5-methyltetrahydrofolate to homocysteine resulting in methionine formation. The sequence is that of 5-methyltetrahydropteroyltriglutamate--homocysteine methyltransferase from Hahella chejuensis (strain KCTC 2396).